A 362-amino-acid polypeptide reads, in one-letter code: Chorismate synthase (362 aa).

Arg47 provides a ligand contact to NADP(+). Residues 124–126 (RAS), Gly286, 301–305 (KPTAT), and Arg327 contribute to the FMN site.

This sequence belongs to the chorismate synthase family. In terms of assembly, homotetramer. It depends on FMNH2 as a cofactor.

The catalysed reaction is 5-O-(1-carboxyvinyl)-3-phosphoshikimate = chorismate + phosphate. It participates in metabolic intermediate biosynthesis; chorismate biosynthesis; chorismate from D-erythrose 4-phosphate and phosphoenolpyruvate: step 7/7. Its function is as follows. Catalyzes the anti-1,4-elimination of the C-3 phosphate and the C-6 proR hydrogen from 5-enolpyruvylshikimate-3-phosphate (EPSP) to yield chorismate, which is the branch point compound that serves as the starting substrate for the three terminal pathways of aromatic amino acid biosynthesis. This reaction introduces a second double bond into the aromatic ring system. The protein is Chorismate synthase of Synechococcus sp. (strain WH7803).